Consider the following 644-residue polypeptide: Exoribonuclease 2 (644 aa).

The region spanning 189–516 (REDLTALDFV…NHRLLKAVIK (328 aa)) is the RNB domain. Positions 561-643 (DTRFAAEIVD…ETRSIIARPV (83 aa)) constitute an S1 motif domain.

It belongs to the RNR ribonuclease family. RNase II subfamily.

Its subcellular location is the cytoplasm. The enzyme catalyses Exonucleolytic cleavage in the 3'- to 5'-direction to yield nucleoside 5'-phosphates.. Functionally, involved in mRNA degradation. Hydrolyzes single-stranded polyribonucleotides processively in the 3' to 5' direction. The polypeptide is Exoribonuclease 2 (Escherichia coli O6:K15:H31 (strain 536 / UPEC)).